The primary structure comprises 245 residues: Zinc import ATP-binding protein ZnuC (245 aa).

The region spanning 27 to 244 (LTADSLTLFY…AKFLSVFPNN (218 aa)) is the ABC transporter domain. 59–66 (GPNGGGKT) is an ATP binding site.

This sequence belongs to the ABC transporter superfamily. Zinc importer (TC 3.A.1.15.5) family. As to quaternary structure, the complex is composed of two ATP-binding proteins (ZnuC), two transmembrane proteins (ZnuB) and a solute-binding protein (ZnuA).

Its subcellular location is the cell inner membrane. The enzyme catalyses Zn(2+)(out) + ATP(in) + H2O(in) = Zn(2+)(in) + ADP(in) + phosphate(in) + H(+)(in). Functionally, part of the ABC transporter complex ZnuABC involved in zinc import. Responsible for energy coupling to the transport system. This Anaplasma marginale (strain St. Maries) protein is Zinc import ATP-binding protein ZnuC.